The sequence spans 904 residues: MRAATAACRDRRGLCRAEFARLAEAVTPFWLHKELIMTTLTGQARLTNSAAYEQVWQAERQACRTDADPDTLTVGVVVVTRNPAFFQTGLSVLNDIRDYVFNRVHIQSEMPLKLLDLAADSLYLAAREKALHFLKGQNKAINVRIIQCASLAEATGKIIYTHALEQRPEFHLGMLFYDQTTPAGVDDSIEQIDRDLDAFYSALQRSGIPAFYTTFSTVAFIRQLRSPFRYLPQQYREIVRSEDPAIFQTELLCLWMDFFEMNYTNRRVKPIGALALHNTLGEQLIQFFERTAAERWLVSYYTGSIISNLIGYLDRHAEARGALILRGPNEHAIACGAMANWQLYRMPFLGVVTSGMMDEFKGTLANLKETAAQGIIVAAENRGNQWYSFQGTLTPTEDMREVLIARRIPFVYIDDVEMIGAGLTEAFRLYHQGQGPVVILATQNVLESTLSLEGAVCDPSPIPVLSADDPLPMSESLAQAIALINRGPERLVWQLGPVSDDEYALIHDIADAAGIALVDSLAHPGSAPKYYQGRRNPHYLGTLAIYGYSPRVYNFLHTNDKLNAMSEQSLFMIKSRVAQITTPFSDGRLERKVHLVQLTHDDRHLSAYADLHLHMNCLAFLRTVKAHLDVDPALRERRRALIAAYLDSPSDVVSQLPSLPMSANYFFCQLNRVIEELIETEGFDFTGVYDVGRCGISAARNVAKTRRGFSGWYGRALMGDALLATGYLAYTSPSHVMAFIGDGAKGIVPDILPAFIDNILTHPQLLNKSITVFYLCNGGLSVINTYQERILFNRTSRQMRLVNVEQPDVEQTVNNFHIQSKTLTHFDEDVIRQALTTSHRLNLFSVVLGHNNEGDGISPGHRQRLAALIRADHDALQERKAWAAQQPESTSTAFDQDPTQEATS.

Positions 879–904 are disordered; sequence RKAWAAQQPESTSTAFDQDPTQEATS. Positions 886-904 are enriched in polar residues; sequence QPESTSTAFDQDPTQEATS.

Belongs to the TPP enzyme family. Thiamine diphosphate serves as cofactor.

It carries out the reaction (2E)-octenal + pyruvate + H(+) = (S)-3-acetyloctanal + CO2. It functions in the pathway antibiotic biosynthesis; prodigiosin biosynthesis. Involved in the biosynthesis of 2-methyl-3-n-amyl-pyrrole (MAP), one of the terminal products involved in the biosynthesis of the red antibiotic prodigiosin (Pig). Catalyzes the decarboxylation of pyruvate, followed by the modification of the resulting two-carbon fragment acetaldehyde at the C3 position of the 2-octenal (1,2-addition of acetaldehyde) giving 3-acetyloctanal. In vitro, it can act on a number of alpha,beta-unsaturated carbonyl compounds, including aldehydes and ketones, and can catalyze both 1,2-addition and Stetter-type 1,4-addition depending on the substrate. The protein is Thiamine diphosphate dependent-3-acetyloctanal synthase PigD of Serratia marcescens.